We begin with the raw amino-acid sequence, 64 residues long: MKGEFLTARDIQKILGVKQAKSYDIIRTLNAQMKEEGYMVIQGKVSRAKFEECYCYKGPKSQTG.

In terms of biological role, required for the excision of the integrative and conjugative element ICEBs1. Excision of ICEBs1 requires two sites, attL and attR, at the left and right ends of the integrated ICEBs1. This is ICEBs1 excisionase (xis) from Bacillus subtilis (strain 168).